We begin with the raw amino-acid sequence, 322 residues long: ATP-dependent 6-phosphofructokinase (322 aa).

Gly12 lines the ATP pocket. 22–26 (RATAK) contributes to the ADP binding site. ATP contacts are provided by residues 73-74 (RS) and 103-106 (GDGS). Asp104 is a binding site for Mg(2+). Residue 127 to 129 (TID) participates in substrate binding. The Proton acceptor role is filled by Asp129. Arg156 serves as a coordination point for ADP. Residues Arg164 and 171 to 173 (MGR) each bind substrate. ADP contacts are provided by residues 187–189 (GGD) and 215–217 (KLH). Residues Glu224, Arg245, and 251–254 (HIQR) each bind substrate.

This sequence belongs to the phosphofructokinase type A (PFKA) family. ATP-dependent PFK group I subfamily. Prokaryotic clade 'B1' sub-subfamily. As to quaternary structure, homotetramer. It depends on Mg(2+) as a cofactor.

It is found in the cytoplasm. The enzyme catalyses beta-D-fructose 6-phosphate + ATP = beta-D-fructose 1,6-bisphosphate + ADP + H(+). Its pathway is carbohydrate degradation; glycolysis; D-glyceraldehyde 3-phosphate and glycerone phosphate from D-glucose: step 3/4. Its activity is regulated as follows. Allosterically activated by ADP and other diphosphonucleosides, and allosterically inhibited by phosphoenolpyruvate. In terms of biological role, catalyzes the phosphorylation of D-fructose 6-phosphate to fructose 1,6-bisphosphate by ATP, the first committing step of glycolysis. The sequence is that of ATP-dependent 6-phosphofructokinase from Fusobacterium nucleatum subsp. nucleatum (strain ATCC 25586 / DSM 15643 / BCRC 10681 / CIP 101130 / JCM 8532 / KCTC 2640 / LMG 13131 / VPI 4355).